The chain runs to 299 residues: Oxygen-dependent coproporphyrinogen-III oxidase (299 aa).

S92 contacts substrate. Mn(2+)-binding residues include H96 and H106. H106 acts as the Proton donor in catalysis. 108–110 (NVR) contributes to the substrate binding site. Residues H145 and H175 each contribute to the Mn(2+) site. Residues 240–275 (YVEFNLVWDRGTLFGLQTGGRTESILMSMPPLVRWE) form an important for dimerization region. Residue 258-260 (GGR) coordinates substrate.

This sequence belongs to the aerobic coproporphyrinogen-III oxidase family. Homodimer. Mn(2+) serves as cofactor.

The protein resides in the cytoplasm. The enzyme catalyses coproporphyrinogen III + O2 + 2 H(+) = protoporphyrinogen IX + 2 CO2 + 2 H2O. The protein operates within porphyrin-containing compound metabolism; protoporphyrin-IX biosynthesis; protoporphyrinogen-IX from coproporphyrinogen-III (O2 route): step 1/1. Involved in the heme biosynthesis. Catalyzes the aerobic oxidative decarboxylation of propionate groups of rings A and B of coproporphyrinogen-III to yield the vinyl groups in protoporphyrinogen-IX. In Escherichia coli O7:K1 (strain IAI39 / ExPEC), this protein is Oxygen-dependent coproporphyrinogen-III oxidase.